The primary structure comprises 231 residues: Acyl-protein thioesterase 1 (231 aa).

Residues Ser121, Asp178, and His211 each act as charge relay system in the active site.

The protein belongs to the AB hydrolase superfamily. AB hydrolase 2 family.

The protein localises to the cytoplasm. Its subcellular location is the nucleus. The catalysed reaction is S-hexadecanoyl-L-cysteinyl-[protein] + H2O = L-cysteinyl-[protein] + hexadecanoate + H(+). Its function is as follows. Hydrolyzes fatty acids from S-acylated cysteine residues in proteins with a strong preference for palmitoylated G-alpha proteins over other acyl substrates. Mediates the deacylation of G-alpha proteins such as GPA1 in vivo, but has weak or no activity toward palmitoylated Ras proteins. Has weak lysophospholipase activity in vitro; however such activity may not exist in vivo. This chain is Acyl-protein thioesterase 1, found in Candida albicans (strain SC5314 / ATCC MYA-2876) (Yeast).